Here is a 198-residue protein sequence, read N- to C-terminus: Small ribosomal subunit protein eS1 (198 aa).

The protein belongs to the eukaryotic ribosomal protein eS1 family.

In Methanosphaerula palustris (strain ATCC BAA-1556 / DSM 19958 / E1-9c), this protein is Small ribosomal subunit protein eS1.